The chain runs to 257 residues: MYNIQDHVVIITGSSSGIGLAASTLALASGAKVFGIDISNSPTSVTANPNYTFFAADLSHPESAKKAIAACIAAYGNRIDGLLNIAGVMDLNQSADTVTDDMWDRCIAINLTAPVKLMREVIPIMRLRGKGSIVNVGSKASMSGAVSGIAYTASKHGLVGATKNVAWRFKHEGIRCNIVCPGGVAATGIRDGVDSTQFDSEALEMMSVIHQAHASDHAKGLGLQPEDLAHSLLYFLSDLSKGISGAVIPVDNAWSTI.

Residues 7–29 traverse the membrane as a helical segment; it reads HVVIITGSSSGIGLAASTLALAS. I11 lines the NADP(+) pocket. Residue N50 is glycosylated (N-linked (GlcNAc...) asparagine). D57 contributes to the NADP(+) binding site. N92 and N110 each carry an N-linked (GlcNAc...) asparagine glycan. NADP(+)-binding residues include R119, Y151, K155, and V184. The active-site Proton acceptor is the Y151. The Lowers pKa of active site Tyr role is filled by K155.

Belongs to the short-chain dehydrogenases/reductases (SDR) family.

The protein localises to the membrane. It catalyses the reaction protoaustinoid A + A = protoaustinoid B + AH2. Its pathway is secondary metabolite biosynthesis; terpenoid biosynthesis. Functionally, short chain dehydrogenase; part of the gene cluster that mediates the biosynthesis of paraherquonin, a meroterpenoid with a unique, highly congested hexacyclic molecular architecture. The first step of the pathway is the synthesis of 3,5-dimethylorsellinic acid (DMOA) by the polyketide synthase prhL. Synthesis of DMOA is followed by farnesylation by the prenyltransferase prhE, methylesterification by the methyl-transferase prhM, epoxidation of the prenyl chain by the flavin-dependent monooxygenase prhF, and cyclization of the farnesyl moiety by the terpene cyclase prhH, to yield the tetracyclic intermediate, protoaustinoid A. The short chain dehydrogenase prhI then oxidizes the C-3 alcohol group of the terpene cyclase product to transform protoaustinoid A into protoaustinoid B. The FAD-binding monooxygenase prhJ catalyzes the oxidation of protoaustinoid B into preaustinoid A which is further oxidized into preaustinoid A1 by FAD-binding monooxygenase phrK. Finally, prhA leads to berkeleydione via the berkeleyone B intermediate. PrhA is a multifunctional dioxygenase that first desaturates at C5-C6 to form berkeleyone B, followed by rearrangement of the A/B-ring to form the cycloheptadiene moiety in berkeleydione. Berkeleydione serves as the key intermediate for the biosynthesis of paraherquonin as well as many other meroterpenoids. The cytochrome P450 monooxygenases prhB, prhD, and prhN, as well as the isomerase prhC, are probably involved in the late stage of paraherquonin biosynthesis, after the production of berkeleydione. Especially prhC might be a multifunctional enzyme that catalyzes the D-ring expansion via intramolecular methoxy rearrangement, as well as the hydrolysis of the expanded D-ring. The sequence is that of Short chain dehydrogenase prhI from Penicillium brasilianum.